We begin with the raw amino-acid sequence, 396 residues long: Chalcone synthase A (396 aa).

The active site involves Cys170.

Belongs to the thiolase-like superfamily. Chalcone/stilbene synthases family.

The catalysed reaction is (E)-4-coumaroyl-CoA + 3 malonyl-CoA + 3 H(+) = 2',4,4',6'-tetrahydroxychalcone + 3 CO2 + 4 CoA. It participates in secondary metabolite biosynthesis; flavonoid biosynthesis. Its function is as follows. The primary product of this enzyme is 4,2',4',6'-tetrahydroxychalcone (also termed naringenin-chalcone or chalcone) which can under specific conditions spontaneously isomerize into naringenin. This Ipomoea purpurea (Common morning glory) protein is Chalcone synthase A (CHSA).